We begin with the raw amino-acid sequence, 485 residues long: GTPase Der (485 aa).

EngA-type G domains lie at 3–167 (PTIA…PEPE) and 176–349 (PVFA…NAAM). GTP is bound by residues 9–16 (GRPNVGKS), 56–60 (DTGGF), 119–122 (NKGE), 182–189 (GRPNVGKS), 229–233 (DTAGV), and 294–297 (NKWD). The KH-like domain maps to 350–434 (IKMPTPKITR…PLRIQYNVSE (85 aa)). The interval 435–485 (NPYENADDKPKKKPLRRVSLSNRIEKREGRKEEKNRFKKKTKVSVKKQFSK) is disordered. Residues 457 to 469 (RIEKREGRKEEKN) are compositionally biased toward basic and acidic residues. The segment covering 470–485 (RFKKKTKVSVKKQFSK) has biased composition (basic residues).

Belongs to the TRAFAC class TrmE-Era-EngA-EngB-Septin-like GTPase superfamily. EngA (Der) GTPase family. In terms of assembly, associates with the 50S ribosomal subunit.

GTPase that plays an essential role in the late steps of ribosome biogenesis. The protein is GTPase Der of Neisseria meningitidis serogroup A / serotype 4A (strain DSM 15465 / Z2491).